A 61-amino-acid chain; its full sequence is UPF0337 protein LMOf2365_2190 (61 aa).

A disordered region spans residues 1-61; sequence MSEDKGMKDK…TGDAKKKLSE (61 aa).

It belongs to the UPF0337 (CsbD) family.

In Listeria monocytogenes serotype 4b (strain F2365), this protein is UPF0337 protein LMOf2365_2190.